The chain runs to 63 residues: Defensin-like protein 278 (63 aa).

A signal peptide spans 1–15 (MSLVYMYMYIGVVMS). Cystine bridges form between Cys-31–Cys-48, Cys-37–Cys-53, and Cys-41–Cys-55.

Belongs to the DEFL family.

It is found in the secreted. The chain is Defensin-like protein 278 from Arabidopsis thaliana (Mouse-ear cress).